The sequence spans 206 residues: Imidazoleglycerol-phosphate dehydratase (206 aa).

The interval 1 to 24 is disordered; it reads MDPTASGRQAPRNPRQATVQRETK.

Belongs to the imidazoleglycerol-phosphate dehydratase family.

The protein localises to the cytoplasm. The catalysed reaction is D-erythro-1-(imidazol-4-yl)glycerol 3-phosphate = 3-(imidazol-4-yl)-2-oxopropyl phosphate + H2O. It participates in amino-acid biosynthesis; L-histidine biosynthesis; L-histidine from 5-phospho-alpha-D-ribose 1-diphosphate: step 6/9. The sequence is that of Imidazoleglycerol-phosphate dehydratase from Acidothermus cellulolyticus (strain ATCC 43068 / DSM 8971 / 11B).